A 138-amino-acid chain; its full sequence is Translation initiation factor 5A (138 aa).

Lys37 carries the post-translational modification Hypusine.

This sequence belongs to the eIF-5A family.

It localises to the cytoplasm. Its function is as follows. Functions by promoting the formation of the first peptide bond. In Pyrococcus horikoshii (strain ATCC 700860 / DSM 12428 / JCM 9974 / NBRC 100139 / OT-3), this protein is Translation initiation factor 5A (eif5a).